Here is a 138-residue protein sequence, read N- to C-terminus: Large ribosomal subunit protein bL17 (138 aa).

Belongs to the bacterial ribosomal protein bL17 family. Part of the 50S ribosomal subunit. Contacts protein L32.

The chain is Large ribosomal subunit protein bL17 from Methylorubrum populi (strain ATCC BAA-705 / NCIMB 13946 / BJ001) (Methylobacterium populi).